Here is a 158-residue protein sequence, read N- to C-terminus: uncharacterized protein (158 aa).

The HTH asnC-type domain maps to 12–73; it reads LDEIDRAILR…LINPFKAGYE (62 aa). The segment at residues 31–50 is a DNA-binding region (H-T-H motif); it reads YSEISRRINVPESTVRARVN.

This is an uncharacterized protein from Pyrococcus horikoshii (strain ATCC 700860 / DSM 12428 / JCM 9974 / NBRC 100139 / OT-3).